The following is a 648-amino-acid chain: Macrolide export ATP-binding/permease protein MacB (648 aa).

Positions 5–243 constitute an ABC transporter domain; sequence LELCNVSRSY…QGVDAAVVNT (239 aa). Residue 41 to 48 coordinates ATP; sequence GVSGSGKS. 5 helical membrane passes run 273–293, 417–437, 523–543, 577–597, and 611–631; these read LLTM…VVVG, ANVV…IGVA, LFLT…VMNI, VLVC…IAFM, and LTAL…FGWL.

The protein belongs to the ABC transporter superfamily. Macrolide exporter (TC 3.A.1.122) family. Homodimer. Part of the tripartite efflux system MacAB-TolC, which is composed of an inner membrane transporter, MacB, a periplasmic membrane fusion protein, MacA, and an outer membrane component, TolC. The complex forms a large protein conduit and can translocate molecules across both the inner and outer membranes. Interacts with MacA.

Its subcellular location is the cell inner membrane. In terms of biological role, part of the tripartite efflux system MacAB-TolC. MacB is a non-canonical ABC transporter that contains transmembrane domains (TMD), which form a pore in the inner membrane, and an ATP-binding domain (NBD), which is responsible for energy generation. Confers resistance against macrolides. In Salmonella typhi, this protein is Macrolide export ATP-binding/permease protein MacB.